A 514-amino-acid chain; its full sequence is Membrane-bound lytic murein transglycosylase F (514 aa).

The signal sequence occupies residues 1-30; the sequence is MKKLKINYLFIGILTLLLAAALWPSIPWFG. The non-LT domain stretch occupies residues 31-269; the sequence is KTENHVAAIQ…RIEEKYLGHG (239 aa). The tract at residues 270 to 514 is LT domain; that stretch reads DDFDYVDTRS…LFTPQKKEEK (245 aa). Glu314 is a catalytic residue.

This sequence in the N-terminal section; belongs to the bacterial solute-binding protein 3 family. In the C-terminal section; belongs to the transglycosylase Slt family.

It is found in the cell outer membrane. It carries out the reaction Exolytic cleavage of the (1-&gt;4)-beta-glycosidic linkage between N-acetylmuramic acid (MurNAc) and N-acetylglucosamine (GlcNAc) residues in peptidoglycan, from either the reducing or the non-reducing ends of the peptidoglycan chains, with concomitant formation of a 1,6-anhydrobond in the MurNAc residue.. In terms of biological role, murein-degrading enzyme that degrades murein glycan strands and insoluble, high-molecular weight murein sacculi, with the concomitant formation of a 1,6-anhydromuramoyl product. Lytic transglycosylases (LTs) play an integral role in the metabolism of the peptidoglycan (PG) sacculus. Their lytic action creates space within the PG sacculus to allow for its expansion as well as for the insertion of various structures such as secretion systems and flagella. This Salmonella arizonae (strain ATCC BAA-731 / CDC346-86 / RSK2980) protein is Membrane-bound lytic murein transglycosylase F.